A 1005-amino-acid polypeptide reads, in one-letter code: Espin-like protein (1005 aa).

ANK repeat units follow at residues 1–31 (MEKQRALVAAKDGDVATLERLLEAGALGPGI), 35–64 (LGAGLVHHATRAGHLDCVKFLVQRAQLPGN), 69–99 (NGATPAHDAAATGSLAELCWLVREGGCGLQD), 103–132 (SGVSPLHLAARFGHPVLVEWLLHEGHSATL), 136–166 (EGARPLHHAAVSGDLTCLKLLTAAHGSSVNR), 170–200 (SGASPLYLACQEGHLHLAQFLVKDCGADVHL), 204–234 (DGMSALHAAAARGHYSLVVWLVTFTDIGLTA), 238–267 (EGATALHFAARGGHTPILDRLLLMGTPILR), and 270–299 (WGGTPLHDAAENGQMECCQTLVSHHVDPSL). 2 disordered regions span residues 333–444 (LMTP…ERGQ) and 462–483 (LGAESSAEAQDNGGSSGPTEQA). A compositionally biased stretch (pro residues) spans 334-346 (MTPPPPPFPPPPL). Residues 468–480 (AEAQDNGGSSGPT) show a composition bias toward polar residues. Positions 517-541 (LQLRRRCQEYESELGRLAAELQALL) form a coiled coil. 3 disordered regions span residues 616–644 (GDEKPSTRPLQDTCREASASPPRSEAQRQ), 695–730 (RSGLASGEPRPGDTEEASDSGISCEEVPSEAGAAAG), and 773–795 (LRGQEAARSPGPPSPPSEGPRLG).

As to quaternary structure, interacts with MYO3A (via C-terminus). Interacts with MYO3B (via C-terminus).

It is found in the cell projection. The protein resides in the stereocilium. Its function is as follows. Binds to but does not cross-link actin. Required for the formation and maintenance of inner ear hair cell stereocilia and staircase formation. Essential for normal hearing. In Homo sapiens (Human), this protein is Espin-like protein (ESPNL).